A 511-amino-acid polypeptide reads, in one-letter code: Myrosinase 4 (511 aa).

A signal peptide spans 1 to 23 (MAIPKAHYSLAVLVLLFVVVSSS). 3 disulfide bridges follow: cysteine 31/cysteine 450, cysteine 39/cysteine 445, and cysteine 230/cysteine 233. Residues asparagine 46 and asparagine 53 are each glycosylated (N-linked (GlcNAc...) asparagine). A beta-D-glucoside contacts are provided by residues glutamine 64, histidine 165, and 210–211 (NQ). Tyrosine 351 and glutamate 418 together coordinate a beta-D-glucoside. The active-site Nucleophile is glutamate 418. N-linked (GlcNAc...) asparagine glycosylation is present at asparagine 428. A beta-D-glucoside is bound by residues tryptophan 467, 474–475 (EF), and phenylalanine 483. The N-linked (GlcNAc...) asparagine glycan is linked to asparagine 489.

Belongs to the glycosyl hydrolase 1 family. As to expression, specifically expressed in roots.

It carries out the reaction a thioglucoside + H2O = a sugar + a thiol.. The enzyme catalyses Hydrolysis of terminal, non-reducing beta-D-glucosyl residues with release of beta-D-glucose.. Its function is as follows. Hydrolyzes sinigrin and, with lower efficiency, p-nitrophenyl beta-D-glucoside. This chain is Myrosinase 4, found in Arabidopsis thaliana (Mouse-ear cress).